We begin with the raw amino-acid sequence, 466 residues long: Catalase ifgD (466 aa).

The tract at residues 1 to 22 is disordered; sequence MAPNYAKKCPVMGKAPSSGHSS. Residue H48 is part of the active site. Heme is bound at residue Y337.

This sequence belongs to the catalase family. Heme is required as a cofactor.

Its pathway is alkaloid biosynthesis; ergot alkaloid biosynthesis. Functionally, catalase; part of the gene cluster that mediates the biosynthesis of isofumigaclavines, fungal ergot alkaloids. The tryptophan dimethylallyltransferase ifgA catalyzes the first step of ergot alkaloid biosynthesis by condensing dimethylallyl diphosphate (DMAP) and tryptophan to form 4-dimethylallyl-L-tryptophan. The second step is catalyzed by the methyltransferase ifgB that methylates 4-dimethylallyl-L-tryptophan in the presence of S-adenosyl-L-methionine, resulting in the formation of N-methyl-dimethylallyl-L-tryptophan. The catalase ifgD and the FAD-dependent oxidoreductase ifgC then transform N-methyl-dimethylallyl-L-tryptophan to chanoclavine-I which is further oxidized by ifgE in the presence of NAD(+), resulting in the formation of chanoclavine-I aldehyde. The chanoclavine-I aldehyde reductases ifgG and/or fgaOx3 reduce chanoclavine-I aldehyde to dihydrochanoclavine-I aldehyde that spontaneously dehydrates to form 6,8-dimethyl-6,7-didehydroergoline. The festuclavine dehydrogenases ifgF1 and/or ifgF2 then catalyze the reduction of 6,8-dimethyl-6,7-didehydroergoline to form festuclavine. Hydrolysis of festuclavine by a yet undetermined cytochrome P450 monooxygenase (called ifgH) then leads to the formation of isofumigaclavine B which is in turn acetylated by ifgI to isofumigaclavine A. Penicillium roqueforti has interestingly at least two sets of genes for the consumption of chanoclavine-I aldehyde on three different loci, the OYEs ifgG/fgaOx3 and the festuclavine synthase homologs ifgF1/ifgF2. The reason for the duplication of these genes is unclear, probably to ensure the conversion of chanoclavine-I aldehyde by differential gene expression under various environmental conditions. The chain is Catalase ifgD from Penicillium roqueforti (strain FM164).